The chain runs to 120 residues: Large ribosomal subunit protein uL18 (120 aa).

It belongs to the universal ribosomal protein uL18 family. As to quaternary structure, part of the 50S ribosomal subunit; part of the 5S rRNA/L5/L18/L25 subcomplex. Contacts the 5S and 23S rRNAs.

Its function is as follows. This is one of the proteins that bind and probably mediate the attachment of the 5S RNA into the large ribosomal subunit, where it forms part of the central protuberance. This chain is Large ribosomal subunit protein uL18, found in Afipia carboxidovorans (strain ATCC 49405 / DSM 1227 / KCTC 32145 / OM5) (Oligotropha carboxidovorans).